The primary structure comprises 387 residues: Protein RecA (387 aa).

80-87 is a binding site for ATP; that stretch reads GPESSGKT. The segment at 348-387 is disordered; sequence LDDSEVAETEEETTASKTKAKAKKEEKAVETEEIELELED. Composition is skewed to acidic residues over residues 349-360 and 378-387; these read DDSEVAETEEET and TEEIELELED.

This sequence belongs to the RecA family.

It is found in the cytoplasm. Its function is as follows. Can catalyze the hydrolysis of ATP in the presence of single-stranded DNA, the ATP-dependent uptake of single-stranded DNA by duplex DNA, and the ATP-dependent hybridization of homologous single-stranded DNAs. It interacts with LexA causing its activation and leading to its autocatalytic cleavage. The chain is Protein RecA from Lactococcus lactis subsp. cremoris (strain MG1363).